Here is a 608-residue protein sequence, read N- to C-terminus: Threonine--tRNA ligase (608 aa).

Positions 1 to 145 (MKTLLIHAKH…TIKPGRRVRP (145 aa)) are editing domain. 2 catalytic regions span residues 192 to 489 (PKYL…PSLP) and 193 to 489 (KYLE…PSLP). Zn(2+)-binding residues include C286, H337, and H458.

The protein belongs to the class-II aminoacyl-tRNA synthetase family. Homodimer. Zn(2+) serves as cofactor.

It is found in the cytoplasm. The enzyme catalyses tRNA(Thr) + L-threonine + ATP = L-threonyl-tRNA(Thr) + AMP + diphosphate + H(+). Catalyzes the attachment of threonine to tRNA(Thr) in a two-step reaction: L-threonine is first activated by ATP to form Thr-AMP and then transferred to the acceptor end of tRNA(Thr). Also edits incorrectly charged L-seryl-tRNA(Thr). The chain is Threonine--tRNA ligase from Thermofilum pendens (strain DSM 2475 / Hrk 5).